A 331-amino-acid polypeptide reads, in one-letter code: Vitamin B12 import system permease protein BtuC (331 aa).

Transmembrane regions (helical) follow at residues 18–38, 64–84, 91–111, 114–134, 149–169, 194–214, 243–263, 277–297, and 305–325; these read WLFG…CAGE, LAVL…QALF, PGLL…VLLG, VLPG…ITFI, LLAG…AVYF, LWLM…SQPL, GWMV…GLVI, VLLP…DIIA, and ELPI…WLLL.

This sequence belongs to the binding-protein-dependent transport system permease family. FecCD subfamily. In terms of assembly, the complex is composed of two ATP-binding proteins (BtuD), two transmembrane proteins (BtuC) and a solute-binding protein (BtuF).

It localises to the cell inner membrane. Its function is as follows. Part of the ABC transporter complex BtuCDF involved in vitamin B12 import. Involved in the translocation of the substrate across the membrane. This is Vitamin B12 import system permease protein BtuC from Klebsiella pneumoniae subsp. pneumoniae (strain ATCC 700721 / MGH 78578).